Consider the following 205-residue polypeptide: Listeria nuclear targeted protein A (205 aa).

Positions 1–36 (MKKLVAWFNGLSKMWKVVVIIGAVFVVIIALTTGED) are cleaved as a signal peptide.

In terms of assembly, interacts specifically with host BAHD1.

The protein localises to the secreted. The protein resides in the host nucleus. Its function is as follows. Relieves the repression of host cell immune response genes (interferon-stimulated genes) by blocking the recruitment of host BAHD1 to these genes. May modulate interferon-mediated immune response to control bacterial colonization of the host. The polypeptide is Listeria nuclear targeted protein A (lntA) (Listeria monocytogenes serovar 1/2a (strain ATCC BAA-679 / EGD-e)).